The following is a 427-amino-acid chain: Enolase (427 aa).

Residue Gln163 coordinates (2R)-2-phosphoglycerate. Glu205 acts as the Proton donor in catalysis. Residues Asp242, Glu285, and Asp312 each coordinate Mg(2+). 4 residues coordinate (2R)-2-phosphoglycerate: Lys337, Arg366, Ser367, and Lys388. The active-site Proton acceptor is Lys337.

This sequence belongs to the enolase family. It depends on Mg(2+) as a cofactor.

Its subcellular location is the cytoplasm. It is found in the secreted. It localises to the cell surface. The catalysed reaction is (2R)-2-phosphoglycerate = phosphoenolpyruvate + H2O. The protein operates within carbohydrate degradation; glycolysis; pyruvate from D-glyceraldehyde 3-phosphate: step 4/5. Its function is as follows. Catalyzes the reversible conversion of 2-phosphoglycerate (2-PG) into phosphoenolpyruvate (PEP). It is essential for the degradation of carbohydrates via glycolysis. This Burkholderia thailandensis (strain ATCC 700388 / DSM 13276 / CCUG 48851 / CIP 106301 / E264) protein is Enolase.